Consider the following 312-residue polypeptide: Glycerol-3-phosphate dehydrogenase [NAD(P)+] (312 aa).

Residues tryptophan 11, arginine 30, arginine 31, and lysine 95 each coordinate NADPH. Sn-glycerol 3-phosphate-binding residues include lysine 95, glycine 123, and serine 125. Alanine 127 is an NADPH binding site. Sn-glycerol 3-phosphate contacts are provided by lysine 177, aspartate 230, serine 240, arginine 241, and asparagine 242. Lysine 177 (proton acceptor) is an active-site residue. Arginine 241 is an NADPH binding site. NADPH is bound by residues valine 265 and glutamate 267.

This sequence belongs to the NAD-dependent glycerol-3-phosphate dehydrogenase family.

It localises to the cytoplasm. It catalyses the reaction sn-glycerol 3-phosphate + NAD(+) = dihydroxyacetone phosphate + NADH + H(+). It carries out the reaction sn-glycerol 3-phosphate + NADP(+) = dihydroxyacetone phosphate + NADPH + H(+). The protein operates within membrane lipid metabolism; glycerophospholipid metabolism. Its function is as follows. Catalyzes the reduction of the glycolytic intermediate dihydroxyacetone phosphate (DHAP) to sn-glycerol 3-phosphate (G3P), the key precursor for phospholipid synthesis. This Helicobacter pylori (strain HPAG1) protein is Glycerol-3-phosphate dehydrogenase [NAD(P)+].